A 585-amino-acid chain; its full sequence is Mitochondrial sodium/calcium exchanger protein (585 aa).

The N-terminal stretch at 1 to 26 (MAGRWLDPLWAPGFLCVALILETASG) is a signal peptide. Over 27–95 (AGDLSTKAHG…GIFCYFPPNL (69 aa)) the chain is Extracellular. N-linked (GlcNAc...) asparagine glycosylation occurs at Asn-46. The helical transmembrane segment at 96-116 (LPLAITLYVFWLLYLFLILGV) threads the bilayer. Over 117–140 (TAAKFFCPNLSAISTSLKLSHNVA) the chain is Cytoplasmic. Residues 141–161 (GVTFLAFGNGAPDIFSALVAF) form a helical membrane-spanning segment. Residues 162 to 168 (SDPRTAG) are Extracellular-facing. The chain crosses the membrane as a helical span at residues 169 to 189 (LAIGALFGAGVLVTTVVAGGI). Over 190-205 (TILRPFMAASRPFLRD) the chain is Cytoplasmic. The chain crosses the membrane as a helical span at residues 206–226 (ITFYMVAVFLTFTALYLGRIT). Position 227 (Leu-227) is a topological domain, extracellular. Residues 228–247 (VWALGYLGLYVFYVVTVIIC) traverse the membrane as a helical segment. At 248-325 (TWVYQRQRSR…KWRTQSISCK (78 aa)) the chain is on the cytoplasmic side. Ser-258 bears the Phosphoserine; by PKA mark. A helical membrane pass occupies residues 326-346 (LLKVAKLPVEFLLLLTVPVVD). Over 347–360 (PDKDDRNWKRPLNC) the chain is Extracellular. A helical transmembrane segment spans residues 361 to 381 (LQLVISPLVLVLTLQSGVYGI). Residues 382 to 383 (YE) are Cytoplasmic-facing. A helical transmembrane segment spans residues 384 to 404 (IGGLLPVWAVVVIVGTALASV). At 405 to 416 (TFFATSNSEPPR) the chain is on the extracellular side. The helical transmembrane segment at 417–437 (LHWLFAFLGFLTSALWINAAA) threads the bilayer. Residues 438 to 445 (TEVVNILR) are Cytoplasmic-facing. A helical transmembrane segment spans residues 446-466 (SLGVVFRLSNTVLGLTLLAWG). Over 467–491 (NSIGDAFSDFTLARQGYPRMAFSAC) the chain is Extracellular. Residues 492–512 (FGGIIFNILVGVGLGCLLQIV) form a helical membrane-spanning segment. Residues 513–525 (RSHASEVKLEPDG) lie on the Cytoplasmic side of the membrane. A helical membrane pass occupies residues 526–546 (LLVWVLASALGLSLVFSLVSV). Topologically, residues 547–559 (PLQCFQLSKAYGL) are extracellular. Residues 560–580 (CLLLFYICFIVVVLLTEFGVI) traverse the membrane as a helical segment. Topologically, residues 581 to 585 (HLKAD) are cytoplasmic.

The protein belongs to the Ca(2+):cation antiporter (CaCA) (TC 2.A.19) family. SLC24A subfamily. In terms of processing, phosphorylation at Ser-258 by PKA prevents calcium overload. Widely expressed. Present at higher level in pancreas, stomach, skeletal muscle and skin (at protein level). Ubiquitously expressed.

The protein resides in the mitochondrion inner membrane. It catalyses the reaction Ca(2+)(in) + 3 Na(+)(out) = Ca(2+)(out) + 3 Na(+)(in). The enzyme catalyses 3 Li(+)(out) + Ca(2+)(in) = 3 Li(+)(in) + Ca(2+)(out). Inhibited by the sodium/calcium exchanger inhibitor CGP-37157. Strongly inhibited by zinc. Its function is as follows. Mitochondrial sodium/calcium antiporter that mediates sodium-dependent calcium efflux from mitochondrion, by mediating the exchange of 3 sodium ions per 1 calcium ion. Plays a central role in mitochondrial calcium homeostasis by mediating mitochondrial calcium extrusion: calcium efflux is essential for mitochondrial function and cell survival, notably in cardiomyocytes. Regulates rates of glucose-dependent insulin secretion in pancreatic beta-cells during the first phase of insulin secretion: acts by mediating efflux of calcium from mitochondrion, thereby affecting cytoplasmic calcium responses. Required for store-operated Ca(2+) entry (SOCE) and Ca(2+) release-activated Ca(2+) (CRAC) channel regulation: sodium transport by SLC8B1 leads to promote calcium-shuttling that modulates mitochondrial redox status, thereby regulating SOCE activity. Involved in B-lymphocyte chemotaxis. Able to transport Ca(2+) in exchange of either Li(+) or Na(+), explaining how Li(+) catalyzes Ca(2+) exchange. In contrast to other members of the family its function is independent of K(+). This chain is Mitochondrial sodium/calcium exchanger protein, found in Rattus norvegicus (Rat).